A 287-amino-acid polypeptide reads, in one-letter code: Bifunctional protein FolD (287 aa).

Residues Gly-165 to Gly-167, Thr-192, and Val-233 contribute to the NADP(+) site.

It belongs to the tetrahydrofolate dehydrogenase/cyclohydrolase family. Homodimer.

It carries out the reaction (6R)-5,10-methylene-5,6,7,8-tetrahydrofolate + NADP(+) = (6R)-5,10-methenyltetrahydrofolate + NADPH. It catalyses the reaction (6R)-5,10-methenyltetrahydrofolate + H2O = (6R)-10-formyltetrahydrofolate + H(+). Its pathway is one-carbon metabolism; tetrahydrofolate interconversion. Catalyzes the oxidation of 5,10-methylenetetrahydrofolate to 5,10-methenyltetrahydrofolate and then the hydrolysis of 5,10-methenyltetrahydrofolate to 10-formyltetrahydrofolate. In Cutibacterium acnes (strain DSM 16379 / KPA171202) (Propionibacterium acnes), this protein is Bifunctional protein FolD.